The sequence spans 309 residues: Probable 3-hydroxyacyl-CoA dehydrogenase B0272.3 (309 aa).

It belongs to the 3-hydroxyacyl-CoA dehydrogenase family. As to quaternary structure, homodimer.

It is found in the mitochondrion matrix. The catalysed reaction is a (3S)-3-hydroxyacyl-CoA + NAD(+) = a 3-oxoacyl-CoA + NADH + H(+). It functions in the pathway lipid metabolism; fatty acid beta-oxidation. This is Probable 3-hydroxyacyl-CoA dehydrogenase B0272.3 from Caenorhabditis elegans.